Here is a 240-residue protein sequence, read N- to C-terminus: Protein FATTY ACID EXPORT 2, chloroplastic (240 aa).

The N-terminal 84 residues, 1 to 84, are a transit peptide targeting the chloroplast; sequence MADLILSSSS…TANCVDSGVK (84 aa). Positions 97–113 are enriched in gly residues; it reads GGGIGGDKFGGGGGGGD. A disordered region spans residues 97–134; it reads GGGIGGDKFGGGGGGGDGNDDGGEDDKEESDGKKSTPL. Residues 114–125 are compositionally biased toward acidic residues; sequence GNDDGGEDDKEE. 3 helical membrane passes run 164 to 184, 186 to 206, and 214 to 234; these read SLLA…QLPT, PVLA…VMGT, and IFPA…YIHG.

It belongs to the TMEM14 family.

The protein localises to the plastid. It is found in the chloroplast membrane. Functionally, may be involved in free fatty acids export from the plastids. The chain is Protein FATTY ACID EXPORT 2, chloroplastic from Arabidopsis thaliana (Mouse-ear cress).